Consider the following 154-residue polypeptide: Large ribosomal subunit protein uL23z (154 aa).

The protein belongs to the universal ribosomal protein uL23 family.

Binds to a specific region on the 26S rRNA. This is Large ribosomal subunit protein uL23z (RPL23AA) from Arabidopsis thaliana (Mouse-ear cress).